The sequence spans 163 residues: Transcriptional repressor NrdR (163 aa).

Residues 3–34 (CPKCNYLKSSVVDSRQAEEGNTIRRRRECENC) fold into a zinc finger. Residues 49–139 (LLVVKKDGTR…VYRSFKDVDE (91 aa)) form the ATP-cone domain.

The protein belongs to the NrdR family. Zn(2+) serves as cofactor.

Its function is as follows. Negatively regulates transcription of bacterial ribonucleotide reductase nrd genes and operons by binding to NrdR-boxes. In Streptococcus mutans serotype c (strain ATCC 700610 / UA159), this protein is Transcriptional repressor NrdR.